Here is a 700-residue protein sequence, read N- to C-terminus: MTTLEEISALTRPRHPDDWTEIDSAAVDTIRVLAADAVQKVGNGHPGTAMSLAPLAYTLFQRTMRHDPSDTHWLGRDRFVLSAGHSSLTLYIQLYLGGFGLELSDIESLRTWGSKTPGHPEFRHTPGVEITTGPLGQGLASAVGMAMASRYERGLFDPDAEPGASPFDHYIYVIASDGDIEEGVTSEASSLAAVQQLGNLIVFYDRNQISIEDDTNIALCEDTAARYRAYGWHVQEVEGGENVVGIEEAIANAQAVTDRPSFIALRTVIGYPAPNLMDTGKAHGAALGDDEVAAVKKIVGFDPDKTFQVREDVLTHTRGLVARGKQAHERWQLEFDAWARREPERKALLDRLLAQKLPDGWDADLPHWEPGSKALATRAASGAVLSALGPKLPELWGGSADLAGSNNTTIKGADSFGPPSISTKEYTAHWYGRTLHFGVREHAMGAILSGIVLHGPTRAYGGTFLQFSDYMRPAVRLAALMDIDTIYVWTHDSIGLGEDGPTHQPIEHLSALRAIPRLSVVRPADANETAYAWRTILARRNGSGPVGLILTRQGVPVLDGTDAEGVARGGYVLSDAGGLQPGEEPDVILIATGSEVQLAVAAQTLLADNDILARVVSMPCLEWFEAQPYEYRDAVLPPTVSARVAVEAGVAQCWHQLVGDTGEIVSIEHYGESADHKTLFREYGFTAEAVAAAAERALDN.

His45 contacts substrate. Thiamine diphosphate is bound by residues Thr48, His85, and 133-135; that span reads GPL. Asp177 lines the Mg(2+) pocket. Thiamine diphosphate is bound by residues Gly178 and Asn207. Mg(2+)-binding residues include Asn207 and Ile209. Substrate contacts are provided by His283, Arg378, and Ser405. His283 contacts thiamine diphosphate. Glu441 serves as the catalytic Proton donor. Phe467 contributes to the thiamine diphosphate binding site. 3 residues coordinate substrate: His491, Asp499, and Arg552.

The protein belongs to the transketolase family. In terms of assembly, homodimer. Mg(2+) is required as a cofactor. Requires Ca(2+) as cofactor. Mn(2+) serves as cofactor. It depends on Co(2+) as a cofactor. The cofactor is thiamine diphosphate.

It carries out the reaction D-sedoheptulose 7-phosphate + D-glyceraldehyde 3-phosphate = aldehydo-D-ribose 5-phosphate + D-xylulose 5-phosphate. In terms of biological role, catalyzes the transfer of a two-carbon ketol group from a ketose donor to an aldose acceptor, via a covalent intermediate with the cofactor thiamine pyrophosphate. This is Transketolase (tkt) from Mycobacterium bovis (strain ATCC BAA-935 / AF2122/97).